The chain runs to 1202 residues: Voltage-gated inwardly rectifying potassium channel KCNH6 (1202 aa).

Residues 1–405 (MGSAALPHAR…YSPFKAVWDW (405 aa)) lie on the Cytoplasmic side of the membrane. The 49-residue stretch at 36–84 (IIYCNDGFCEMFGYSRVEVMQRPCTCDFLTGPDTTKSSIAQLTQALLGS) folds into the PAS domain. Residues 87 to 139 (CKLEILYYRKDTSCFRCLVDVVPVKNEDGVVIMFILNFEDLAQLIAKSSGRSL) form the PAC domain. Disordered stretches follow at residues 203–243 (ENCV…LGPR) and 285–315 (ERRA…SDSD). The segment covering 213-222 (LLEKERRPSL) has biased composition (basic and acidic residues). Residues 406–426 (LILLLVIYTAVFTPYSAAFLL) form a helical membrane-spanning segment. The Extracellular segment spans residues 427–443 (NEEQGEEKHWNCSYSCD). An N-linked (GlcNAc...) asparagine glycan is attached at asparagine 437. A helical membrane pass occupies residues 444–464 (PLNIIDLIVDIMFIVDIVINF). Over 465–485 (RTTYVNINDEVVSHPGKIAIH) the chain is Cytoplasmic. A helical membrane pass occupies residues 486 to 506 (YFKGWFLIDMVAAIPFDLLIF). The Extracellular portion of the chain corresponds to 507–515 (RSGSDETTT). Residues 516-536 (LIGLLKTARLLRLVRVARKLD) form a helical; Voltage-sensor membrane-spanning segment. Residues 537–543 (RYSEYGA) lie on the Cytoplasmic side of the membrane. The helical transmembrane segment at 544–564 (AVLFLLMCTFALIAHWLACIW) threads the bilayer. The Extracellular segment spans residues 565–608 (YAIGNVERPYMEHKIGWLDNLGDQIGKRYNDSDLSSGPSIKDKY). N-linked (GlcNAc...) asparagine glycosylation occurs at asparagine 594. An intramembrane region (pore-forming) is located at residues 609 to 629 (VTALYFTFSSLTSVGFGNVSP). A Selectivity filter motif is present at residues 621-626 (SVGFGN). Residues 630-635 (NTNSEK) lie on the Extracellular side of the membrane. A helical membrane pass occupies residues 636–656 (IFSICVMLIGSLMYASIFGNV). Over 657–1202 (SAIIQRLYSG…HLSDPVLPGS (546 aa)) the chain is Cytoplasmic. The tract at residues 739-839 (AFRGASKGCL…IQREDLLEVL (101 aa)) is cNMP-binding domain. Disordered stretches follow at residues 912–948 (LTNP…GSPT), 1092–1112 (TPCA…PSYA), and 1140–1202 (TVYS…LPGS). Positions 928 to 937 (GSSTTPCSQT) are enriched in polar residues. A compositionally biased stretch (basic and acidic residues) spans 1179–1195 (EHLEASSEHQDIQRHLS).

The protein belongs to the potassium channel family. H (Eag) (TC 1.A.1.20) subfamily. Kv11.2/KCNH6 sub-subfamily. As to quaternary structure, the potassium channel is probably composed of a homo- or heterotetrameric complex of pore-forming alpha subunits that can associate only within their subfamily.

It is found in the cell membrane. The enzyme catalyses K(+)(in) = K(+)(out). Its function is as follows. Pore-forming (alpha) subunit of voltage-gated inwardly rectifying potassium channel. Characterized by unusual gating kinetics by producing relatively small outward currents during membrane depolarization and large inward currents during subsequent repolarization which reflect a rapid inactivation during depolarization and quick recovery from inactivation but slow deactivation (closing) during repolarization. Activates even more slowly than KCNH2. This Gallus gallus (Chicken) protein is Voltage-gated inwardly rectifying potassium channel KCNH6.